A 1401-amino-acid chain; its full sequence is Kinesin-like protein KIF27 (1401 aa).

The region spanning 5-341 (PVKVAVRIRP…LKYANRARNI (337 aa)) is the Kinesin motor domain. 84–91 (GQTGSGKT) provides a ligand contact to ATP. Coiled coils occupy residues 352–413 (ESDR…GYQC) and 489–557 (LAAD…KLNL). Residues S643, S646, S672, S675, and S704 each carry the phosphoserine modification. The interval 643 to 662 (SDNSDDEESEGQEKSGTRCR) is disordered. Coiled-coil stretches lie at residues 705–886 (QELN…IQLK), 916–1070 (DHLQ…AAIE), 1118–1154 (NKVVNLREAERKQQLYNEEMKMKVLERDNMVRELESA), and 1190–1219 (EGIMETFKTYEDKIQQLEKDLYFYKKTSRD). A Phosphoserine modification is found at S999. Basic and acidic residues predominate over residues 1259 to 1280 (EELKWASRPESMKLSGREREMD). A disordered region spans residues 1259–1332 (EELKWASRPE…TETDDNQFTK (74 aa)). Positions 1281 to 1292 (SSASSLRTQPNP) are enriched in polar residues. S1367 and S1389 each carry phosphoserine.

This sequence belongs to the TRAFAC class myosin-kinesin ATPase superfamily. Kinesin family. KIF27 subfamily. As to quaternary structure, interacts with STK36. In terms of tissue distribution, testis, pancreatic islet, germ cell tumors and Jurkat T-cells.

Its subcellular location is the cytoplasm. It is found in the cytoskeleton. The protein localises to the cell projection. The protein resides in the cilium. In terms of biological role, plays an essential role in motile ciliogenesis. This is Kinesin-like protein KIF27 (KIF27) from Homo sapiens (Human).